The primary structure comprises 232 residues: Putative N-acetylmannosamine-6-phosphate 2-epimerase (232 aa).

The protein belongs to the NanE family.

The enzyme catalyses an N-acyl-D-glucosamine 6-phosphate = an N-acyl-D-mannosamine 6-phosphate. It functions in the pathway amino-sugar metabolism; N-acetylneuraminate degradation; D-fructose 6-phosphate from N-acetylneuraminate: step 3/5. Functionally, converts N-acetylmannosamine-6-phosphate (ManNAc-6-P) to N-acetylglucosamine-6-phosphate (GlcNAc-6-P). The chain is Putative N-acetylmannosamine-6-phosphate 2-epimerase from Proteus mirabilis (strain HI4320).